The following is a 529-amino-acid chain: Putative E3 ubiquitin-protein ligase ARI4 (529 aa).

Residues 1–22 are compositionally biased toward acidic residues; that stretch reads MDDEYMSLEEEEDNCYPSEFDD. The disordered stretch occupies residues 1–23; the sequence is MDDEYMSLEEEEDNCYPSEFDDH. Positions 115 to 327 are TRIAD supradomain; sequence KTMKCDICME…IAGHSCGRYK (213 aa). Zn(2+) is bound by residues Cys119, Cys122, Cys137, His139, Cys142, Cys145, Cys164, Cys169, Cys206, Cys212, Cys230, Cys232, Cys237, Cys240, His245, Cys250, Cys277, and Cys280. The RING-type 1 zinc-finger motif lies at 119-169; it reads CDICMEEDLSKYAMTRMECGHRFCNDCWKEHFTVRINEGEGKRIRCMAYKC. The IBR-type zinc-finger motif lies at 186 to 250; it reads EKFDRFLIES…LSESHSPCSC (65 aa). An RING-type 2; atypical zinc finger spans residues 277–305; sequence CPKCSKPIQKRDGCNHMTCKCGQHFCWLC. Residue Cys290 is part of the active site. 6 residues coordinate Zn(2+): Cys295, Cys297, Cys302, Cys305, His313, and Cys323.

This sequence belongs to the RBR family. Ariadne subfamily. Requires Zn(2+) as cofactor.

The enzyme catalyses [E2 ubiquitin-conjugating enzyme]-S-ubiquitinyl-L-cysteine + [acceptor protein]-L-lysine = [E2 ubiquitin-conjugating enzyme]-L-cysteine + [acceptor protein]-N(6)-ubiquitinyl-L-lysine.. It functions in the pathway protein modification; protein ubiquitination. In terms of biological role, might act as an E3 ubiquitin-protein ligase, or as part of E3 complex, which accepts ubiquitin from specific E2 ubiquitin-conjugating enzymes and then transfers it to substrates. This chain is Putative E3 ubiquitin-protein ligase ARI4 (ARI4), found in Arabidopsis thaliana (Mouse-ear cress).